Consider the following 148-residue polypeptide: Deoxyuridine 5'-triphosphate nucleotidohydrolase (148 aa).

Residues 68-70 (RSG), N81, 85-87 (TID), and K95 each bind substrate.

It belongs to the dUTPase family. It depends on Mg(2+) as a cofactor.

It carries out the reaction dUTP + H2O = dUMP + diphosphate + H(+). The protein operates within pyrimidine metabolism; dUMP biosynthesis; dUMP from dCTP (dUTP route): step 2/2. Its function is as follows. This enzyme is involved in nucleotide metabolism: it produces dUMP, the immediate precursor of thymidine nucleotides and it decreases the intracellular concentration of dUTP so that uracil cannot be incorporated into DNA. In Rickettsia rickettsii (strain Iowa), this protein is Deoxyuridine 5'-triphosphate nucleotidohydrolase.